The primary structure comprises 170 residues: Translocator protein 2 (170 aa).

5 helical membrane-spanning segments follow: residues 3 to 23 (LQGAIFVLLPHLGPILVWLFT), 45 to 65 (VLLLVQTAIYSVVGYASYLVW), 78 to 98 (LPLGLYAVQLTISWTVLVLFF), 104 to 124 (GLALLHLLLLYGLVVSTALIW), and 130 to 150 (LAALLLLPYLAWLTVTSALTY).

The protein belongs to the TspO/BZRP family. As to quaternary structure, homotetramer. May also form homodimer. Expressed in erythrocytes (at protein level).

It is found in the endoplasmic reticulum membrane. Its subcellular location is the cell membrane. In terms of biological role, cholesterol-binding protein involved in the redistribution of cholesterol from lipid droplets to the endoplasmic reticulum. Required to meet cholesterol demands during erythropoietic differentiation. May play a role in transport processes at the plasma membrane of erythrocytes, including regulating VDAC-mediated ATP export, and import of the heme precursors protoporphyrin IX and 5-aminolevulinic acid. The chain is Translocator protein 2 (TSPO2) from Homo sapiens (Human).